Reading from the N-terminus, the 450-residue chain is MGSSYQESPPLLLEDLKVTIKESTLIFPSEETSERKSMFLSNVDQILNFDVQTVHFFRPNKEFPPEMVSEKLRKALVKLMDAYEFLAGRLRVDPSSGRLDVDCNGAGAGFVTAASDYTLEELGDLVYPNPAFAQLVTSQLQSLPKDDQPLFVFQITSFKCGGFAMGISTNHTTFDGLSFKTFLENLASLLHEKPLSTPPCNDRTLLKARDPPSVAFPHHELVKFQDCETTTVFEATSEHLDFKIFKLSSEQIKKLKERASETSNGNVRVTGFNVVTALVWRCKALSVAAEEGEETNLERESTILYAVDIRGRLNPELPPSYTGNAVLTAYAKEKCKALLEEPFGRIVEMVGEGSKRITDEYARSAIDWGELYKGFPHGEVLVSSWWKLGFAEVEYPWGKPKYSCPVVYHRKDIVLLFPDIDGDSKGVYVLAALPSKEMSKFQHWFEDTLC.

Catalysis depends on proton acceptor residues H171 and E394.

It belongs to the plant acyltransferase family. In terms of tissue distribution, restricted to the central cells of embryo sacs.

It is found in the cytoplasm. It localises to the nucleus. In terms of biological role, required for double fertilization of the egg cell and the central cell by two sperm cells, resulting in the formation of the embryo and the endosperm. Involved in the regulation of embryonic expression of PHE1. Essential in maternal tissues to ensure the paternal embryonic expression of several genes, including RPS5a and FAC1, both of which being essential for early embryo and endosperm development in fertilized seeds. The chain is Acyltransferase GLAUCE from Arabidopsis thaliana (Mouse-ear cress).